We begin with the raw amino-acid sequence, 283 residues long: Pantothenate synthetase (283 aa).

An ATP-binding site is contributed by 30–37 (MGALHEGH). The Proton donor role is filled by histidine 37. (R)-pantoate is bound at residue glutamine 61. Glutamine 61 serves as a coordination point for beta-alanine. 147–150 (GEKD) contacts ATP. Residue glutamine 153 participates in (R)-pantoate binding. Residues valine 176 and 184-187 (VSSR) each bind ATP.

The protein belongs to the pantothenate synthetase family. As to quaternary structure, homodimer.

Its subcellular location is the cytoplasm. It carries out the reaction (R)-pantoate + beta-alanine + ATP = (R)-pantothenate + AMP + diphosphate + H(+). It participates in cofactor biosynthesis; (R)-pantothenate biosynthesis; (R)-pantothenate from (R)-pantoate and beta-alanine: step 1/1. In terms of biological role, catalyzes the condensation of pantoate with beta-alanine in an ATP-dependent reaction via a pantoyl-adenylate intermediate. The protein is Pantothenate synthetase of Chlorobium limicola (strain DSM 245 / NBRC 103803 / 6330).